The primary structure comprises 353 residues: MAATKRKRRGGFAVQAKKPKRNEKDAEPPAKRHATAEEVEEEERDRIPGPVCKGKWKNKERILIFSSRGINFRTRHLMQDLRMLMPHSKADTKMDRKDKLFVINEVCEMKNCNKCIYFEAKKKQDLYMWLSNSPHGPSAKFLVQNIHTLAELKMTGNCLKGSRPLLSFDPAFDELPHYALLKELLIQILSTPRYHPKSQPFVDHVFTFTILDNRIWFRNFQIIEEDAALVEIGPRFVLNLIKIFQGSFGGPTLYENPHYQSPNMHRRVTRSITAAKYREKQQVKDVQKLRKKEPKTLLPHDPTADVFVTPAEEKPIEIQWVKPEPKVDLKARKKRIYKRQRKMKQRMDSGKTK.

The span at 1-10 (MAATKRKRRG) shows a compositional bias: basic residues. A disordered region spans residues 1–46 (MAATKRKRRGGFAVQAKKPKRNEKDAEPPAKRHATAEEVEEEERDR). A compositionally biased stretch (basic and acidic residues) spans 22-36 (NEKDAEPPAKRHATA). The Brix domain occupies 60–249 (ERILIFSSRG…LIKIFQGSFG (190 aa)). A Glycyl lysine isopeptide (Lys-Gly) (interchain with G-Cter in SUMO2) cross-link involves residue K160. S261 carries the post-translational modification Phosphoserine. K276 is modified (N6-acetyllysine). Residues K314 and K322 each participate in a glycyl lysine isopeptide (Lys-Gly) (interchain with G-Cter in SUMO2) cross-link.

The protein belongs to the BRX1 family.

It localises to the nucleus. The protein resides in the nucleolus. Required for biogenesis of the 60S ribosomal subunit. The sequence is that of Ribosome biogenesis protein BRX1 homolog (BRIX1) from Pongo abelii (Sumatran orangutan).